The chain runs to 500 residues: Cytochrome P450 2D20 (500 aa).

Cys446 serves as a coordination point for heme.

This sequence belongs to the cytochrome P450 family. It depends on heme as a cofactor.

The protein localises to the endoplasmic reticulum membrane. The protein resides in the microsome membrane. This Mesocricetus auratus (Golden hamster) protein is Cytochrome P450 2D20 (CYP2D20).